The sequence spans 120 residues: ATP-dependent Clp protease adapter protein ClpS (120 aa).

Belongs to the ClpS family. Binds to the N-terminal domain of the chaperone ClpA.

Involved in the modulation of the specificity of the ClpAP-mediated ATP-dependent protein degradation. The chain is ATP-dependent Clp protease adapter protein ClpS from Azotobacter vinelandii (strain DJ / ATCC BAA-1303).